The following is a 159-amino-acid chain: uncharacterized protein (159 aa).

Disordered stretches follow at residues 1–29 (MHQT…TSES) and 114–159 (TRGG…NENT). The span at 15 to 29 (SFSNESPTSRETSES) shows a compositional bias: polar residues.

This is an uncharacterized protein from Homo sapiens (Human).